The chain runs to 317 residues: Melanocyte-stimulating hormone receptor (317 aa).

The Extracellular segment spans residues 1 to 37 (MAVQGFQRRLLGSLNSTPTAIPQLGLAANQTGARCLE). The N-linked (GlcNAc...) asparagine glycan is linked to N29. A helical membrane pass occupies residues 38-63 (VSIPDGLFLSLGLVSLVENVLVVATI). Over 64–72 (AKNRNLHSP) the chain is Cytoplasmic. A helical transmembrane segment spans residues 73 to 93 (TYCFICCLALSDLLVSGGNVL). Topologically, residues 94-118 (ETVVILLLEASALAARAAVVQPLDN) are extracellular. The helical transmembrane segment at 119–140 (VIDVITCSSMVSSLCFLGAIAV) threads the bilayer. At 141 to 163 (DRYVSIFYALRYHSIVTLPRARQ) the chain is on the cytoplasmic side. A helical membrane pass occupies residues 164-183 (AIAAIWVASVLFSTLFIAYY). Over 184–191 (DHAAVLLC) the chain is Extracellular. The chain crosses the membrane as a helical span at residues 192 to 211 (LVVFFLAMLVXMAVLYVHML). Over 212–240 (ARACQHAQGIARLHKRQRPLHQGFGLKGA) the chain is Cytoplasmic. A helical transmembrane segment spans residues 241 to 266 (VTLTILLGIFFLCWGPFFLHLTLIVL). The Extracellular portion of the chain corresponds to 267–279 (CPQHPTCSCIFKN). A helical membrane pass occupies residues 280–300 (FNLFLTLIICNAIIDPLIYAF). The Cytoplasmic segment spans residues 301–317 (RRQELRRTLKEGLTCSW). C315 carries the S-palmitoyl cysteine lipid modification.

This sequence belongs to the G-protein coupled receptor 1 family. As to quaternary structure, interacts with MGRN1, but does not undergo MGRN1-mediated ubiquitination; this interaction competes with GNAS-binding and thus inhibits agonist-induced cAMP production. Interacts with OPN3; the interaction results in a decrease in MC1R-mediated cAMP signaling and ultimately a decrease in melanin production in melanocytes.

Its subcellular location is the cell membrane. In terms of biological role, receptor for MSH (alpha, beta and gamma) and ACTH. The activity of this receptor is mediated by G proteins which activate adenylate cyclase. Mediates melanogenesis, the production of eumelanin (black/brown) and phaeomelanin (red/yellow), via regulation of cAMP signaling in melanocytes. In Hylobates muelleri (Mueller's Bornean gibbon), this protein is Melanocyte-stimulating hormone receptor (MC1R).